A 332-amino-acid polypeptide reads, in one-letter code: Ferredoxin--NADP reductase (332 aa).

6 residues coordinate FAD: glutamate 36, glutamine 44, tyrosine 49, valine 91, phenylalanine 124, and threonine 327.

It belongs to the ferredoxin--NADP reductase type 2 family. As to quaternary structure, homodimer. FAD is required as a cofactor.

It catalyses the reaction 2 reduced [2Fe-2S]-[ferredoxin] + NADP(+) + H(+) = 2 oxidized [2Fe-2S]-[ferredoxin] + NADPH. The sequence is that of Ferredoxin--NADP reductase from Streptococcus thermophilus (strain CNRZ 1066).